A 62-amino-acid chain; its full sequence is Conotoxin TxIC (62 aa).

Positions 1–22 (MHCLPIFVILLLLTASGPSVDA) are cleaved as a signal peptide. Residues 23–47 (QLKTKDDVPLSSFRDHAKSTLRRLQ) constitute a propeptide that is removed on maturation. 2 disulfide bridges follow: Cys-52-Cys-58 and Cys-53-Cys-61. A 4-hydroxyproline modification is found at Pro-60. The residue at position 61 (Cys-61) is a Cysteine amide.

Belongs to the conotoxin A superfamily. Expressed by the venom duct.

It localises to the secreted. This chain is Conotoxin TxIC, found in Conus textile (Cloth-of-gold cone).